A 156-amino-acid chain; its full sequence is Small ribosomal subunit protein uS7 (156 aa).

The protein belongs to the universal ribosomal protein uS7 family. In terms of assembly, part of the 30S ribosomal subunit. Contacts proteins S9 and S11.

Functionally, one of the primary rRNA binding proteins, it binds directly to 16S rRNA where it nucleates assembly of the head domain of the 30S subunit. Is located at the subunit interface close to the decoding center, probably blocks exit of the E-site tRNA. The polypeptide is Small ribosomal subunit protein uS7 (Lactobacillus johnsonii (strain CNCM I-12250 / La1 / NCC 533)).